The sequence spans 62 residues: Small ribosomal subunit protein bS21 (62 aa).

The segment at 43–62 (EKRKRKAMALQKQRKRRSRY) is disordered. A compositionally biased stretch (basic residues) spans 44 to 62 (KRKRKAMALQKQRKRRSRY).

Belongs to the bacterial ribosomal protein bS21 family.

The polypeptide is Small ribosomal subunit protein bS21 (Trichodesmium erythraeum (strain IMS101)).